A 1687-amino-acid polypeptide reads, in one-letter code: MGAGSSTEQRSPEQPAGSDTPSELVLSGHGPAAEASGAAGDPADADPATKLPQKNGQLSTVNGVAEQGDVHVQEENQEGQEEEVVDEDVGQRESEDVREKDRVEEMAANSTAVEDITKDGQEETSEIIEQIPASESNVEEMVQPAESQANDVGFKKVFKFVGFKFTVKKDKNEKSDTVQLLTVKKDEGEGAEASVGAGDHQEPSVETAVGESASKESELKQSTEKQEGTLKQEQSSTEIPLQAESDQAAEEEAKDEGEEKQEKEPTKSPESPSSPVSSETTSSFKKFFTHGWAGWRKKTSFKKSKEDDLETAEKRKEQEAEKVDEEEKEKTEPASEEQEPAEDTDQARLSADYEKVELPLEDQVGDLEASSEEKCAPLATEVFDEKMEAHQEVVAEVHVSTVEKTEEEQGGGGEAEGGVVVEGTGESLPPEKLAEPQEVPQEAEPAEELMKSREMCVSGGDHTQLTDLSPEEKTLPKHPEGIVSEVEMLSSQERIKVQGSPLKKLFSSSGLKKLSGKKQKGKRGGGGDEEPGEYQHIHTESPESADEQKGESSASSPEEPEETTCLEKGPLEAPQDGEAEEGTTSDGEKKREGITPWASFKKMVTPKKRVRRPSESDKEEELEKVKSATLSSTDSTVSEMQDEVKTVGEEQKPEEPKRRVDTSVSWEALICVGSSKKRARKASSSDDEGGPRTLGGDSHRAEEASKDKEAGTDAVPASTQEQDQAQGSSSPEPAGSPSEGEGVSTWESFKRLVTPRKKSKSKLEEKAEDSSVEQLSTEIEPSREESWVSIKKFIPGRRKKRADGKQEQATVEDSGPVEINEDDPDVPAVVPLSEYDAVEREKMEAQGNAELPQLLGAVYVSEELSKTLVHTVSVAVIDGTRAVTSVEERSPSWISASVTEPLEHTAGEAMPPVEEVTEKDIIAEETPVLTQTLPEGKDAHDDMVTSEVDFTSEAVTATETSEALRTEEVTEASGAEETTDMVSAVSQLTDSPDTTEEATPVQEVEGGVLDTEEEERQTQAILQAVADKVKEESQVPATQTVQRTGSKALEKVEEVEEDSEVLASEKEKDVMPKGPVQEAGAEHLAQGSETGQATPESLEVPEVTADVDHVATCQVIKLQQLMEQAVAPESSETLTDSETNGSTPLADSDTADGTQQDETIDSQDSKATAAVRQSQVTEEEAATAQKEEPSTLPNNVPAQEEHGEEPGRDVLEPTQQELAAAAVPVLAKTEVGQEGEVDWLDGEKVKEEQEVFVHSGPNSQKAADVTYDSEVMGVAGCQEKESTEVQSLSLEEGEMETDVEKEKRETKPEQVSEEGEQETAAPEHEGTYGKPVLTLDMPSSERGKALGSLGGSPSLPDQDKAGCIEVQVQSLDTTVTQTAEAVEKVIETVVISETGESPECVGAHLLPAEKSSATGGHWTLQHAEDTVPLGPESQAESIPIIVTPAPESTLHPDLQGEISASQRERSEEEDKPDAGPDADGKESTAIEKVLKAEPEILELESKSNKIVLNVIQTAVDQFARTETAPETHAYDSQTQVPAMQADSQGAQQMLDKNESCQDETPSAAAQRGLASPDRSGGMGSASEMLAALAVESAGVKVSIEKLPPQPKDQKEHAADGPQLQSLAQAEASASGNLTKESPDTNGPKLTEEGDAPKVEVQEEEMSTKSVKENKAQAEEDLQEPKGDLAES.

Residues 1-108 (MGAGSSTEQR…EKDRVEEMAA (108 aa)) are disordered. Glycine 2 carries the N-myristoyl glycine lipid modification. Residues serine 11, serine 18, serine 22, and serine 27 each carry the phosphoserine modification. Residues 30–48 (GPAAEASGAAGDPADADPA) are compositionally biased toward low complexity. A compositionally biased stretch (polar residues) spans 52–62 (PQKNGQLSTVN). The segment covering 75–88 (ENQEGQEEEVVDED) has biased composition (acidic residues). Over residues 89–105 (VGQRESEDVREKDRVEE) the composition is skewed to basic and acidic residues. Phosphoserine is present on residues serine 136 and serine 204. 2 disordered regions span residues 175 to 282 (SDTV…ETTS) and 298 to 355 (KTSF…DYEK). Positions 213–230 (ASKESELKQSTEKQEGTL) are enriched in basic and acidic residues. A phosphoserine mark is found at serine 235 and serine 245. Acidic residues predominate over residues 247-259 (QAAEEEAKDEGEE). Residues 254–544 (KDEGEEKQEK…QHIHTESPES (291 aa)) form an involved in PKC-binding region. Serine 268, serine 271, serine 274, and serine 304 each carry phosphoserine. Low complexity predominate over residues 268–282 (SPESPSSPVSSETTS). A compositionally biased stretch (basic and acidic residues) spans 303-321 (KSKEDDLETAEKRKEQEAE). Threonine 331 carries the post-translational modification Phosphothreonine. Positions 334 to 344 (ASEEQEPAEDT) are enriched in acidic residues. Residues serine 335 and serine 350 each carry the phosphoserine modification. At tyrosine 353 the chain carries Phosphotyrosine. At serine 371 the chain carries Phosphoserine. The disordered stretch occupies residues 402 to 481 (VEKTEEEQGG…EKTLPKHPEG (80 aa)). A compositionally biased stretch (low complexity) spans 417–426 (GGVVVEGTGE). The residue at position 469 (serine 469) is a Phosphoserine. Basic and acidic residues predominate over residues 470 to 480 (PEEKTLPKHPE). Residues serine 491, serine 507, and serine 509 each carry the phosphoserine modification. Residues 496–828 (KVQGSPLKKL…INEDDPDVPA (333 aa)) are disordered. Low complexity predominate over residues 499 to 513 (GSPLKKLFSSSGLKK). The segment covering 514–523 (LSGKKQKGKR) has biased composition (basic residues). A compositionally biased stretch (basic and acidic residues) spans 533–550 (EYQHIHTESPESADEQKG). Phosphoserine is present on residues serine 541, serine 544, serine 585, serine 599, serine 614, and serine 616. An AKAP CaM-binding 1 motif is present at residues 594 to 614 (ITPWASFKKMVTPKKRVRRPS). Basic and acidic residues predominate over residues 612–626 (RPSESDKEEELEKVK). The span at 628-639 (ATLSSTDSTVSE) shows a compositional bias: polar residues. Threonine 629 carries the phosphothreonine modification. Phosphoserine occurs at positions 631, 632, 635, and 638. A compositionally biased stretch (basic and acidic residues) spans 642 to 661 (DEVKTVGEEQKPEEPKRRVD). Phosphoserine is present on residues serine 683, serine 684, and serine 685. Basic and acidic residues predominate over residues 697–711 (DSHRAEEASKDKEAG). Residues 717–726 (ASTQEQDQAQ) are compositionally biased toward polar residues. Residues 727–744 (GSSSPEPAGSPSEGEGVS) show a composition bias toward low complexity. Serine 736, serine 748, serine 770, serine 771, and serine 789 each carry phosphoserine. An AKAP CaM-binding 2 motif is present at residues 743–763 (VSTWESFKRLVTPRKKSKSKL). Positions 784–804 (EESWVSIKKFIPGRRKKRADG) match the AKAP CaM-binding 3 motif. The residue at position 871 (threonine 871) is a Phosphothreonine. Serine 873 carries the phosphoserine modification. Residues 959–981 (ETSEALRTEEVTEASGAEETTDM) are disordered. Lysine 1030 participates in a covalent cross-link: Glycyl lysine isopeptide (Lys-Gly) (interchain with G-Cter in SUMO1). A compositionally biased stretch (polar residues) spans 1035-1045 (VPATQTVQRTG). 4 disordered regions span residues 1035–1105 (VPAT…EVTA), 1125–1221 (AVAP…LAAA), 1277–1361 (CQEK…QDKA), and 1443–1487 (TPAP…TAIE). At serine 1059 the chain carries Phosphoserine. Residues 1130 to 1157 (SSETLTDSETNGSTPLADSDTADGTQQD) show a composition bias toward polar residues. The segment covering 1199 to 1211 (QEEHGEEPGRDVL) has biased composition (basic and acidic residues). A Phosphoserine modification is found at serine 1289. Positions 1298–1310 (DVEKEKRETKPEQ) are enriched in basic and acidic residues. A phosphoserine mark is found at serine 1348, serine 1352, and serine 1354. Basic and acidic residues predominate over residues 1462-1487 (QRERSEEEDKPDAGPDADGKESTAIE). The interval 1498-1511 (ELESKSNKIVLNVI) is RII-binding. 2 disordered regions span residues 1522–1582 (ETAP…GSAS) and 1599–1687 (IEKL…LAES). The span at 1530–1547 (YDSQTQVPAMQADSQGAQ) shows a compositional bias: polar residues. Residues serine 1543 and serine 1571 each carry the phosphoserine modification. Residues 1618-1630 (QLQSLAQAEASAS) are compositionally biased toward low complexity. Phosphoserine is present on serine 1637. Residues 1645 to 1687 (LTEEGDAPKVEVQEEEMSTKSVKENKAQAEEDLQEPKGDLAES) show a composition bias toward basic and acidic residues.

In terms of assembly, binds to dimeric RII-alpha regulatory subunit of PKC. In terms of processing, phosphorylated by PKC (in vitro).

It is found in the cytoplasm. It localises to the cytoskeleton. The protein localises to the membrane. Anchoring protein that mediates the subcellular compartmentation of protein kinase A (PKA) and protein kinase C (PKC). This chain is A-kinase anchor protein 12 (Akap12), found in Rattus norvegicus (Rat).